The following is a 198-amino-acid chain: Small ribosomal subunit protein uS4 (198 aa).

The S4 RNA-binding domain maps to 91–154; the sequence is SRLDNVVYRL…KNLNIVQEAL (64 aa).

This sequence belongs to the universal ribosomal protein uS4 family. Part of the 30S ribosomal subunit. Contacts protein S5. The interaction surface between S4 and S5 is involved in control of translational fidelity.

One of the primary rRNA binding proteins, it binds directly to 16S rRNA where it nucleates assembly of the body of the 30S subunit. Functionally, with S5 and S12 plays an important role in translational accuracy. This Aster yellows witches'-broom phytoplasma (strain AYWB) protein is Small ribosomal subunit protein uS4.